The primary structure comprises 189 residues: GTP cyclohydrolase 1 (189 aa).

Positions 78, 81, and 150 each coordinate Zn(2+).

The protein belongs to the GTP cyclohydrolase I family. In terms of assembly, toroid-shaped homodecamer, composed of two pentamers of five dimers.

The catalysed reaction is GTP + H2O = 7,8-dihydroneopterin 3'-triphosphate + formate + H(+). It participates in cofactor biosynthesis; 7,8-dihydroneopterin triphosphate biosynthesis; 7,8-dihydroneopterin triphosphate from GTP: step 1/1. This chain is GTP cyclohydrolase 1, found in Listeria monocytogenes serovar 1/2a (strain ATCC BAA-679 / EGD-e).